We begin with the raw amino-acid sequence, 362 residues long: tRNA 2-selenouridine synthase (362 aa).

Residues 12-135 (FLNDTPLLDV…LRRFLIDEME (124 aa)) form the Rhodanese domain. The active-site S-selanylcysteine intermediate is the Cys-95.

The protein belongs to the SelU family. As to quaternary structure, monomer.

It catalyses the reaction 5-methylaminomethyl-2-thiouridine(34) in tRNA + selenophosphate + (2E)-geranyl diphosphate + H2O + H(+) = 5-methylaminomethyl-2-selenouridine(34) in tRNA + (2E)-thiogeraniol + phosphate + diphosphate. It carries out the reaction 5-methylaminomethyl-2-thiouridine(34) in tRNA + (2E)-geranyl diphosphate = 5-methylaminomethyl-S-(2E)-geranyl-thiouridine(34) in tRNA + diphosphate. The catalysed reaction is 5-methylaminomethyl-S-(2E)-geranyl-thiouridine(34) in tRNA + selenophosphate + H(+) = 5-methylaminomethyl-2-(Se-phospho)selenouridine(34) in tRNA + (2E)-thiogeraniol. The enzyme catalyses 5-methylaminomethyl-2-(Se-phospho)selenouridine(34) in tRNA + H2O = 5-methylaminomethyl-2-selenouridine(34) in tRNA + phosphate. Involved in the post-transcriptional modification of the uridine at the wobble position (U34) of tRNA(Lys), tRNA(Glu) and tRNA(Gln). Catalyzes the conversion of 2-thiouridine (S2U-RNA) to 2-selenouridine (Se2U-RNA). Acts in a two-step process involving geranylation of 2-thiouridine (S2U) to S-geranyl-2-thiouridine (geS2U) and subsequent selenation of the latter derivative to 2-selenouridine (Se2U) in the tRNA chain. In Alcanivorax borkumensis (strain ATCC 700651 / DSM 11573 / NCIMB 13689 / SK2), this protein is tRNA 2-selenouridine synthase.